Consider the following 226-residue polypeptide: 2-C-methyl-D-erythritol 4-phosphate cytidylyltransferase (226 aa).

Belongs to the IspD/TarI cytidylyltransferase family. IspD subfamily.

The catalysed reaction is 2-C-methyl-D-erythritol 4-phosphate + CTP + H(+) = 4-CDP-2-C-methyl-D-erythritol + diphosphate. Its pathway is isoprenoid biosynthesis; isopentenyl diphosphate biosynthesis via DXP pathway; isopentenyl diphosphate from 1-deoxy-D-xylulose 5-phosphate: step 2/6. Catalyzes the formation of 4-diphosphocytidyl-2-C-methyl-D-erythritol from CTP and 2-C-methyl-D-erythritol 4-phosphate (MEP). The polypeptide is 2-C-methyl-D-erythritol 4-phosphate cytidylyltransferase (Parasynechococcus marenigrum (strain WH8102)).